The sequence spans 245 residues: ATP synthase subunit a (245 aa).

The next 7 membrane-spanning stretches (helical) occupy residues 5–25 (LWFT…MMSV), 37–57 (ISNY…FFIA), 99–119 (YIVT…IPGF), 125–145 (FPSV…VHGL), 157–177 (FLGP…CSHF), 187–209 (LYAN…PLGF), and 221–241 (SLIQ…EATA).

Belongs to the ATPase A chain family. In terms of assembly, F-type ATPases have 2 components, CF(1) - the catalytic core - and CF(0) - the membrane proton channel. CF(1) has five subunits: alpha(3), beta(3), gamma(1), delta(1), epsilon(1). CF(0) has three main subunits: a(1), b(2) and c(9-12). The alpha and beta chains form an alternating ring which encloses part of the gamma chain. CF(1) is attached to CF(0) by a central stalk formed by the gamma and epsilon chains, while a peripheral stalk is formed by the delta and b chains.

The protein localises to the cell inner membrane. Its function is as follows. Key component of the proton channel; it plays a direct role in the translocation of protons across the membrane. The sequence is that of ATP synthase subunit a from Koribacter versatilis (strain Ellin345).